The sequence spans 362 residues: NAD(P)H-quinone oxidoreductase subunit 1, chloroplastic (362 aa).

8 helical membrane-spanning segments follow: residues 29 to 49, 103 to 123, 128 to 148, 164 to 184, 202 to 222, 247 to 267, 303 to 323, and 335 to 355; these read ILPILTLLLGITIEVLVIVWL, IAVISILLSFLVIPLGYHFVL, IGVFLWIAISSIAPIGLLMAG, AAQSISYEIPLTFCVLAISLL, FFGWNIWRQPIGFLVFLISSL, YSGIKYGLFYLVSYLNLLVSS, TIGIFITLTKAYLFLFISITI, and LLNLGWKFLLPISLGNLLLTT.

The protein belongs to the complex I subunit 1 family. NDH is composed of at least 16 different subunits, 5 of which are encoded in the nucleus.

The protein localises to the plastid. It is found in the chloroplast thylakoid membrane. It carries out the reaction a plastoquinone + NADH + (n+1) H(+)(in) = a plastoquinol + NAD(+) + n H(+)(out). The enzyme catalyses a plastoquinone + NADPH + (n+1) H(+)(in) = a plastoquinol + NADP(+) + n H(+)(out). Its function is as follows. NDH shuttles electrons from NAD(P)H:plastoquinone, via FMN and iron-sulfur (Fe-S) centers, to quinones in the photosynthetic chain and possibly in a chloroplast respiratory chain. The immediate electron acceptor for the enzyme in this species is believed to be plastoquinone. Couples the redox reaction to proton translocation, and thus conserves the redox energy in a proton gradient. The sequence is that of NAD(P)H-quinone oxidoreductase subunit 1, chloroplastic from Agrostis stolonifera (Creeping bentgrass).